We begin with the raw amino-acid sequence, 401 residues long: Tyrosine--tRNA ligase (401 aa).

The 'HIGH' region signature appears at 42–51 (PTAPDLHLGH). The short motif at 226-230 (KMSKS) is the 'KMSKS' region element. Lys-229 provides a ligand contact to ATP. One can recognise an S4 RNA-binding domain in the interval 336-397 (IALAQLLKQI…GKRRIAKLSI (62 aa)).

It belongs to the class-I aminoacyl-tRNA synthetase family. TyrS type 2 subfamily. As to quaternary structure, homodimer.

It localises to the cytoplasm. It catalyses the reaction tRNA(Tyr) + L-tyrosine + ATP = L-tyrosyl-tRNA(Tyr) + AMP + diphosphate + H(+). Catalyzes the attachment of tyrosine to tRNA(Tyr) in a two-step reaction: tyrosine is first activated by ATP to form Tyr-AMP and then transferred to the acceptor end of tRNA(Tyr). This is Tyrosine--tRNA ligase from Legionella pneumophila subsp. pneumophila (strain Philadelphia 1 / ATCC 33152 / DSM 7513).